Consider the following 84-residue polypeptide: Subtilisin-chymotrypsin inhibitor WSCI (84 aa).

Residues 1–12 (MSSVVKKPLGGN) form the signal peptide. Residues 1–28 (MSSVVKKPLGGNTDTGDHHNQKTEWPEL) are disordered. The span at 15–25 (TGDHHNQKTEW) shows a compositional bias: basic and acidic residues.

Monomer.

The protein resides in the secreted. In terms of biological role, inhibits B.lichenoformis subtilisin, B.subtilis subtilisin, bovine pancreatic alpha-chymotrypsin and porcine alpha-chymotrypsin with Ki of 3.92 nM, 5.70 nM, 7.24 nM and 9.35 nM respectively. B.lichenoformis subtilisin is inhibited with a molar ratio of 1:0.87. Also inhibits chymotrypsin-like activities from the digestive tracts of the insect larvae T.molitor, P.interpunctella and H.armigera. Does not inhibit bovine pancreatic trypsin, porcine pancreatic elastase, or human leukocyte elastase. In Triticum aestivum (Wheat), this protein is Subtilisin-chymotrypsin inhibitor WSCI.